Consider the following 485-residue polypeptide: 6-phosphogluconate dehydrogenase, decarboxylating (485 aa).

Residues 12-17 (GLAVMG), 35-37 (NRT), 77-79 (VKA), and N105 each bind NADP(+). Residues N105 and 131–133 (SGG) contribute to the substrate site. Residue K186 is the Proton acceptor of the active site. 189 to 190 (HN) contributes to the substrate binding site. E193 acts as the Proton donor in catalysis. Substrate-binding residues include Y194, K263, R290, R449, and H455.

The protein belongs to the 6-phosphogluconate dehydrogenase family. In terms of assembly, homodimer.

The catalysed reaction is 6-phospho-D-gluconate + NADP(+) = D-ribulose 5-phosphate + CO2 + NADPH. It participates in carbohydrate degradation; pentose phosphate pathway; D-ribulose 5-phosphate from D-glucose 6-phosphate (oxidative stage): step 3/3. Catalyzes the oxidative decarboxylation of 6-phosphogluconate to ribulose 5-phosphate and CO(2), with concomitant reduction of NADP to NADPH. The chain is 6-phosphogluconate dehydrogenase, decarboxylating (6-PGD) from Cunninghamella elegans.